The primary structure comprises 491 residues: MATFKDACYHYKKLNKLNSLVLKLGANDEWRPAPVTKYKGWCLDCCQYTNLTYCRGCALYHVCQWCSQYNRCFLDEEPHLLRMRTFKDVVTKEDIEGLLTMYETLFPINEKLVNKFINSVKQRKCRNEYLLEWYNHLLMPITLQALTINLEDNVYYIFGYYDCMEHENQTPFQFINLLEKYDKLLLDDRNFHRMSHLPVILQQEYALRYFSKSRFLSKGKKRLSRSDFSDSLMEDRHSPTSLMQVVRNCISIHINDCEWNKACTLIVDARNYISIMNSSYTEHYSVSQRCKLFTKYKFGIVSRLVKPNYIFSSHESCALNVHNCKWCQINNHYKVWEDFRLRKIYNNVMDFIRALVKSNGNVGHCSSQESVYKYIPDLFLICKTEKWNEAVEMLFNYLEPVDINGTEYVLLDYEVNWEVRGLVMQNMDGKVPRILNMNDTKKILSAMIFDWFDTRYMRETPMTTSTTNQLRTLNKRNELIDEYDLELSDVE.

An RNA-binding region spans residues 1–81 (MATFKDACYH…CFLDEEPHLL (81 aa)). The tract at residues 42–79 (CLDCCQYTNLTYCRGCALYHVCQWCSQYNRCFLDEEPH) is zinc-binding domain. The important for cytoskeleton localization stretch occupies residues 82–176 (RMRTFKDVVT…ENQTPFQFIN (95 aa)). An interaction with host IRF3 region spans residues 320 to 491 (NVHNCKWCQI…EYDLELSDVE (172 aa)). Residues 485–488 (LELS) carry the pLxIS motif motif.

This sequence belongs to the rotavirus NSP1 family. Interacts (via C-terminus) with host IRF3; this interaction leads to IRF3 degradation. Interacts with host IRF7; this interaction leads to IRF7 degradation. Interacts with host CUL1 and CUL3.

It localises to the host cytoplasm. It is found in the host cytoskeleton. In terms of biological role, plays a role in the inhibition of host innate immunity by inducing the degradation of key host factors required to activate interferon production such as IRF3, IRF5 or IRF7. Associates with components of cullin RING ligases (CRLs) including CUL1 or CUL3, which are essential multisubunit ubiquitination complexes, to modulate their activities. In Bos taurus (Bovine), this protein is Non-structural protein 1.